We begin with the raw amino-acid sequence, 127 residues long: Small ribosomal subunit protein uS11 (127 aa).

Belongs to the universal ribosomal protein uS11 family. As to quaternary structure, part of the 30S ribosomal subunit.

Functionally, located on the platform of the 30S subunit. In Natronomonas pharaonis (strain ATCC 35678 / DSM 2160 / CIP 103997 / JCM 8858 / NBRC 14720 / NCIMB 2260 / Gabara) (Halobacterium pharaonis), this protein is Small ribosomal subunit protein uS11.